Consider the following 823-residue polypeptide: Protein Jade-3 (823 aa).

The tract at residues 1 to 40 is disordered; that stretch reads MKRHRPVSSSESSDECPSTSFTSSSMYRKKSKNPKEQKKS. The segment covering 8 to 20 has biased composition (low complexity); sequence SSSESSDECPSTS. Lys-30, Lys-32, and Lys-35 each carry N6-acetyllysine. The PHD-type 1 zinc-finger motif lies at 200–250; the sequence is DVICDVCRSPDSEEGNDMVFCDKCNVCVHQACYGILKIPEGSWLCRSCVLG. A C2HC pre-PHD-type zinc finger spans residues 252–286; the sequence is YPQCVLCPKKGGAMKTTRTGTKWAHVSCALWIPEV. The PHD-type 2 zinc finger occupies 310–366; that stretch reads LVCNLCKLKTGACIQCSVKSCITAFHVTCAFEHGLEMKTILDEGDEVKFKSFCLKHS. Disordered stretches follow at residues 543–585 and 601–631; these read LKMP…PEEP and KSNC…AEFY. The segment covering 549–562 has biased composition (basic and acidic residues); sequence TSEDCKDSSTETEH. Ser-566 and Ser-578 each carry phosphoserine. Lys-601 is subject to N6-acetyllysine. Ser-608 is subject to Phosphoserine. Lys-638 carries the N6-acetyllysine modification. Positions 651 to 676 are disordered; that stretch reads SIGNGKNQPNSRVSSSNGLEGNWSGN. The residue at position 735 (Lys-735) is an N6-acetyllysine. A disordered region spans residues 756–823; it reads TGRASYQETD…HPHSHSSMQR (68 aa). Residues Ser-774 and Ser-776 each carry the phosphoserine modification. Residues 781–809 are compositionally biased toward basic and acidic residues; sequence EGSKETPRVKRESSDRENPSHDSARECHG.

It belongs to the JADE family. Component of the HBO1 complex composed at least of ING4 or ING5, MYST2/HBO1, MEAF6, and one of JADE1, JADE2 and JADE3.

Scaffold subunit of some HBO1 complexes, which have a histone H4 acetyltransferase activity. In Mus musculus (Mouse), this protein is Protein Jade-3 (Jade3).